The following is an 81-amino-acid chain: Photosystem I iron-sulfur center (81 aa).

4Fe-4S ferredoxin-type domains follow at residues serine 2–tryptophan 31 and isoleucine 39–tyrosine 68. Cysteine 11, cysteine 14, cysteine 17, cysteine 21, cysteine 48, cysteine 51, cysteine 54, and cysteine 58 together coordinate [4Fe-4S] cluster.

The cyanobacterial PSI reaction center is composed of one copy each of PsaA,B,C,D,E,F,I,J,K,L,M and X, and forms trimeric complexes. Requires [4Fe-4S] cluster as cofactor.

It is found in the cellular thylakoid membrane. It catalyses the reaction reduced [plastocyanin] + hnu + oxidized [2Fe-2S]-[ferredoxin] = oxidized [plastocyanin] + reduced [2Fe-2S]-[ferredoxin]. In terms of biological role, apoprotein for the two 4Fe-4S centers FA and FB of photosystem I (PSI); essential for photochemical activity. FB is the terminal electron acceptor of PSI, donating electrons to ferredoxin. The C-terminus interacts with PsaA/B/D and helps assemble the protein into the PSI complex. Required for binding of PsaD and PsaE to PSI. PSI is a plastocyanin/cytochrome c6-ferredoxin oxidoreductase, converting photonic excitation into a charge separation, which transfers an electron from the donor P700 chlorophyll pair to the spectroscopically characterized acceptors A0, A1, FX, FA and FB in turn. The protein is Photosystem I iron-sulfur center of Prochlorococcus marinus (strain MIT 9211).